A 214-amino-acid chain; its full sequence is Osteoclast-stimulating factor 1 (214 aa).

Serine 2 carries the N-acetylserine modification. The SH3 domain maps to 12-71; sequence GQVKVFRALYTFEPRTPDELYFEEGDIIYITDMSDTNWWKGTCKGRTGLIPSNYVAEQAE. ANK repeat units lie at residues 72 to 101, 105 to 135, and 139 to 168; these read SIDN…GVNG, AGST…ELNQ, and LGDT…RTDL. 2 positions are modified to phosphoserine: serine 202 and serine 213.

In terms of assembly, interacts with SRC and SMN1. Interacts with FASLG.

It is found in the cytoplasm. In terms of biological role, induces bone resorption, acting probably through a signaling cascade which results in the secretion of factor(s) enhancing osteoclast formation and activity. In Bos taurus (Bovine), this protein is Osteoclast-stimulating factor 1 (OSTF1).